The chain runs to 720 residues: Phosphate acetyltransferase (720 aa).

Residues 389–720 (AFRHELVQKS…LEAKAAALAS (332 aa)) form a phosphate acetyltransferase region.

The protein in the N-terminal section; belongs to the CobB/CobQ family. In the C-terminal section; belongs to the phosphate acetyltransferase and butyryltransferase family. As to quaternary structure, homohexamer.

It is found in the cytoplasm. It catalyses the reaction acetyl-CoA + phosphate = acetyl phosphate + CoA. It participates in metabolic intermediate biosynthesis; acetyl-CoA biosynthesis; acetyl-CoA from acetate: step 2/2. Functionally, involved in acetate metabolism. The chain is Phosphate acetyltransferase (pta) from Acinetobacter baylyi (strain ATCC 33305 / BD413 / ADP1).